We begin with the raw amino-acid sequence, 73 residues long: MPKKDGVIEIEGTVIEALPNAMFRVELSNGHKVLAHISGKMRQHYIRILPEDRVVVELSPYDLSRGRIVYRYK.

An S1-like domain is found at 1–73 (MPKKDGVIEI…SRGRIVYRYK (73 aa)).

Belongs to the IF-1 family. As to quaternary structure, component of the 30S ribosomal translation pre-initiation complex which assembles on the 30S ribosome in the order IF-2 and IF-3, IF-1 and N-formylmethionyl-tRNA(fMet); mRNA recruitment can occur at any time during PIC assembly.

Its subcellular location is the cytoplasm. One of the essential components for the initiation of protein synthesis. Stabilizes the binding of IF-2 and IF-3 on the 30S subunit to which N-formylmethionyl-tRNA(fMet) subsequently binds. Helps modulate mRNA selection, yielding the 30S pre-initiation complex (PIC). Upon addition of the 50S ribosomal subunit IF-1, IF-2 and IF-3 are released leaving the mature 70S translation initiation complex. The chain is Translation initiation factor IF-1 from Kineococcus radiotolerans (strain ATCC BAA-149 / DSM 14245 / SRS30216).